A 354-amino-acid chain; its full sequence is MQRVKTKQIFVGNVAVGGDAPISVQSMTFSKTCDIEATKAQLDRLYFAGADMVRVAVSDPKDADALKDLKKVSPLPLIADIHFRYKFALIAAESVDCIRINPGNIGSKDRIKAVADACNARGIPIRIGVNGGSLEKQFEEKYGATPKGMVESALYNIKLLEDFGFSNIKISLKASDVLRTMEAYRMLRPLVDYPFHLGVTEAGTLPHSMIKSAMALGGLLMEGIGDTMRISITGELEEEIKVARLILQYSGRQKSGVSIVSCPTCGRIEANLVKMVQEVESRIKHIKIPLQVSVMGCAVNALGEAKHADIAIAFGNKDGLIIKEGKILCKLKEDQLLERFITEVEELAKQREEV.

[4Fe-4S] cluster contacts are provided by Cys262, Cys265, Cys297, and Glu304.

This sequence belongs to the IspG family. [4Fe-4S] cluster serves as cofactor.

The catalysed reaction is (2E)-4-hydroxy-3-methylbut-2-enyl diphosphate + oxidized [flavodoxin] + H2O + 2 H(+) = 2-C-methyl-D-erythritol 2,4-cyclic diphosphate + reduced [flavodoxin]. The protein operates within isoprenoid biosynthesis; isopentenyl diphosphate biosynthesis via DXP pathway; isopentenyl diphosphate from 1-deoxy-D-xylulose 5-phosphate: step 5/6. Converts 2C-methyl-D-erythritol 2,4-cyclodiphosphate (ME-2,4cPP) into 1-hydroxy-2-methyl-2-(E)-butenyl 4-diphosphate. This Helicobacter hepaticus (strain ATCC 51449 / 3B1) protein is 4-hydroxy-3-methylbut-2-en-1-yl diphosphate synthase (flavodoxin).